The chain runs to 234 residues: Large ribosomal subunit protein uL1 (234 aa).

The protein belongs to the universal ribosomal protein uL1 family. In terms of assembly, part of the 50S ribosomal subunit.

Functionally, binds directly to 23S rRNA. The L1 stalk is quite mobile in the ribosome, and is involved in E site tRNA release. In terms of biological role, protein L1 is also a translational repressor protein, it controls the translation of the L11 operon by binding to its mRNA. The polypeptide is Large ribosomal subunit protein uL1 (Helicobacter acinonychis (strain Sheeba)).